The primary structure comprises 296 residues: Glycine--tRNA ligase alpha subunit (296 aa).

It belongs to the class-II aminoacyl-tRNA synthetase family. As to quaternary structure, tetramer of two alpha and two beta subunits.

The protein localises to the cytoplasm. It carries out the reaction tRNA(Gly) + glycine + ATP = glycyl-tRNA(Gly) + AMP + diphosphate. The chain is Glycine--tRNA ligase alpha subunit from Listeria monocytogenes serotype 4a (strain HCC23).